The primary structure comprises 230 residues: Uracil-DNA glycosylase (230 aa).

Asp65 acts as the Proton acceptor in catalysis.

The protein belongs to the uracil-DNA glycosylase (UDG) superfamily. UNG family.

The protein localises to the cytoplasm. It carries out the reaction Hydrolyzes single-stranded DNA or mismatched double-stranded DNA and polynucleotides, releasing free uracil.. Excises uracil residues from the DNA which can arise as a result of misincorporation of dUMP residues by DNA polymerase or due to deamination of cytosine. The protein is Uracil-DNA glycosylase of Lactiplantibacillus plantarum (strain ATCC BAA-793 / NCIMB 8826 / WCFS1) (Lactobacillus plantarum).